Reading from the N-terminus, the 455-residue chain is DNA repair protein RadA (455 aa).

A C4-type zinc finger spans residues 11–28 (CVGCGYVHPKWLGRCPEC). Position 97 to 104 (97 to 104 (GEPGIGKS)) interacts with ATP. The short motif at 250–254 (KNRFG) is the RadA KNRFG motif element. Residues 350–455 (DIYVNVAGGI…IAEIFSKAKA (106 aa)) form a lon-protease-like region.

It belongs to the RecA family. RadA subfamily.

In terms of biological role, DNA-dependent ATPase involved in processing of recombination intermediates, plays a role in repairing DNA breaks. Stimulates the branch migration of RecA-mediated strand transfer reactions, allowing the 3' invading strand to extend heteroduplex DNA faster. Binds ssDNA in the presence of ADP but not other nucleotides, has ATPase activity that is stimulated by ssDNA and various branched DNA structures, but inhibited by SSB. Does not have RecA's homology-searching function. In Treponema pallidum (strain Nichols), this protein is DNA repair protein RadA.